A 296-amino-acid chain; its full sequence is Nucleotide-binding protein SSA_0810 (296 aa).

ATP is bound at residue 13 to 20 (GMSGAGKT). 63–66 (DMRS) is a GTP binding site. The disordered stretch occupies residues 277–296 (WPVNSSHRDKNRRKETVNRS). Residues 282–296 (SHRDKNRRKETVNRS) show a composition bias toward basic and acidic residues.

Belongs to the RapZ-like family.

Displays ATPase and GTPase activities. This chain is Nucleotide-binding protein SSA_0810, found in Streptococcus sanguinis (strain SK36).